The primary structure comprises 337 residues: MFVDRVIIELIAGKGGNGVVAWRREKYIPKGGPAGGNGGRGGSVILEADTQISSLDWFRHRRILKAQSGGDGGGNCRQGKNGTDLILKVPCGTLLKDAKSGKVIHDFVEDKERFVLCKGGRGGRGNDSFKTPTHQAPNICTEGTLGEIHHIELELKLIADVGLVGFPNAGKSTLISSLAGLRVKVAAYPFTTLQPNLGFIELDNYKRIYIADIPGIIEGASHNRGLGLEFLRHIERTKLLIFILDASGIDGRTPSHDFRILREEIGAYNPELLERPYLVVLNKIDTEDSPSHIQEFEKNFSISSDMLFKISAVYGEGLQELIEKMTQRLSQKKEIEY.

Residues 1–158 form the Obg domain; the sequence is MFVDRVIIEL…HHIELELKLI (158 aa). Positions 159–330 constitute an OBG-type G domain; sequence ADVGLVGFPN…LIEKMTQRLS (172 aa). Residues 165 to 172, 190 to 194, 212 to 215, 282 to 285, and 311 to 313 contribute to the GTP site; these read GFPNAGKS, FTTLQ, DIPG, NKID, and SAV. Mg(2+)-binding residues include serine 172 and threonine 192.

Belongs to the TRAFAC class OBG-HflX-like GTPase superfamily. OBG GTPase family. As to quaternary structure, monomer. It depends on Mg(2+) as a cofactor.

It is found in the cytoplasm. An essential GTPase which binds GTP, GDP and possibly (p)ppGpp with moderate affinity, with high nucleotide exchange rates and a fairly low GTP hydrolysis rate. Plays a role in control of the cell cycle, stress response, ribosome biogenesis and in those bacteria that undergo differentiation, in morphogenesis control. This chain is GTPase Obg, found in Protochlamydia amoebophila (strain UWE25).